The sequence spans 438 residues: Indole diterpene prenyltransferase paxD (438 aa).

80–81 contacts L-tryptophan; that stretch reads FM. Substrate contacts are provided by R102, K190, R264, K266, Y268, Y349, and Y418.

This sequence belongs to the tryptophan dimethylallyltransferase family.

It participates in secondary metabolite biosynthesis. Indole diterpene prenyltransferase; part of the gene cluster that mediates the biosynthesis of paxilline, a mycotoxin that acts as an inhibitor of mammalian maxi-K channels. PaxG, the geranylgeranyl diphosphate (GGPP) synthase is proposed to catalyze the first step in paxilline biosynthesis. Condensation of indole-3-glycerol phosphate with GGPP by paxC then forms 3-geranylgeranylindole (3-GGI), followed by epoxidation and cyclization of this intermediate (by paxM and paxB) to form paspaline. Paspaline is subsequently converted to 13-desoxypaxilline by paxP, the latter being then converted to paxilline by paxQ. Finally paxilline can be mono- and di-prenylated by paxD. The chain is Indole diterpene prenyltransferase paxD from Penicillium paxilli.